Here is a 298-residue protein sequence, read N- to C-terminus: Golgi to ER traffic protein 2 (298 aa).

At 1–164 (MSEPVVDTAE…LEYNTYNQKL (164 aa)) the chain is on the cytoplasmic side. A disordered region spans residues 40 to 92 (ILSQGSSVKTSGVKSVLDQEKEATPSHDEDPEIQDITEITTPPPRTPPIGEDA). Over residues 42–55 (SQGSSVKTSGVKSV) the composition is skewed to low complexity. Over residues 56-67 (LDQEKEATPSHD) the composition is skewed to basic and acidic residues. A helical transmembrane segment spans residues 165–185 (WKFRFLLVRVSVTLFNFFYHY). The Lumenal portion of the chain corresponds to 186 to 211 (INLSNFHASNYAYVRDLSSEKYPVRD). A helical membrane pass occupies residues 212–231 (FFTWFATTEVVLVAAYYSIF). The Cytoplasmic portion of the chain corresponds to 232-275 (HSLGLFHAANQNSFVLKAMSMGSMVLPQLEHYKPLVARFLGYYE). The chain crosses the membrane as a helical span at residues 276–296 (LLGIVLGDLSLVIVLFGLLSF). Over 297–298 (AN) the chain is Lumenal.

It belongs to the GET2 family. As to quaternary structure, component of the Golgi to ER traffic (GET) complex, which is composed of GET1, GET2 and GET3. Within the complex, GET1 and GET2 form a heterotetramer which is stabilized by phosphatidylinositol binding and which binds to the GET3 homodimer.

Its subcellular location is the endoplasmic reticulum membrane. The protein resides in the golgi apparatus membrane. Required for the post-translational delivery of tail-anchored (TA) proteins to the endoplasmic reticulum. Together with GET1, acts as a membrane receptor for soluble GET3, which recognizes and selectively binds the transmembrane domain of TA proteins in the cytosol. The GET complex cooperates with the HDEL receptor ERD2 to mediate the ATP-dependent retrieval of resident ER proteins that contain a C-terminal H-D-E-L retention signal from the Golgi to the ER. The sequence is that of Golgi to ER traffic protein 2 from Candida albicans (strain SC5314 / ATCC MYA-2876) (Yeast).